The chain runs to 278 residues: Urease accessory protein UreD (278 aa).

It belongs to the UreD family. As to quaternary structure, ureD, UreF and UreG form a complex that acts as a GTP-hydrolysis-dependent molecular chaperone, activating the urease apoprotein by helping to assemble the nickel containing metallocenter of UreC. The UreE protein probably delivers the nickel.

It is found in the cytoplasm. Its function is as follows. Required for maturation of urease via the functional incorporation of the urease nickel metallocenter. The protein is Urease accessory protein UreD of Staphylococcus aureus (strain JH1).